A 900-amino-acid polypeptide reads, in one-letter code: Peroxisomal hydratase-dehydrogenase-epimerase (900 aa).

Short-chain dehydrogenase like regions lie at residues 6 to 230 and 319 to 535; these read SFKD…THES and SLCN…ASEE. 6 residues coordinate NADP(+): I14, K53, N100, R133, Y165, and K169. The active-site Proton donor is Y165. Residue K169 is the Lowers pKa of active site Tyr of the active site. Positions 689, 690, 719, 803, 805, 826, 851, and 852 each coordinate (3R)-3-hydroxydecanoyl-CoA. The MaoC-like domain occupies 775 to 887; sequence EVPHGKVPDF…DTTRNVIVLD (113 aa). The Microbody targeting signal signature appears at 898–900; sequence SKL.

The protein belongs to the short-chain dehydrogenases/reductases (SDR) family. Monomer.

The protein localises to the peroxisome. The catalysed reaction is a (3R)-3-hydroxyacyl-CoA = a (2E)-enoyl-CoA + H2O. It catalyses the reaction a (3R)-3-hydroxyacyl-CoA + NAD(+) = a 3-oxoacyl-CoA + NADH + H(+). Its pathway is lipid metabolism; fatty acid beta-oxidation. Second trifunctional enzyme acting on the beta-oxidation pathway for fatty acids, possessing hydratase-dehydrogenase-epimerase activities. Converts trans-2-enoyl-CoA via D-3-hydroxyacyl-CoA to 3-ketoacyl-CoA. This Saccharomyces cerevisiae (strain ATCC 204508 / S288c) (Baker's yeast) protein is Peroxisomal hydratase-dehydrogenase-epimerase (FOX2).